The following is a 471-amino-acid chain: MAKIKTRFAPSPTGYLHIGGARTALYSWLYARRHGGHFVLRIEDTDRERSTQESVNVILEGMSWLGLDYDEGPFYQTERFDRYRELTQRLLDEGLAYRCYCSKERLDALRQEQMANKQKPRYDGRCRDLTEPPEGAGEPVIRFRNPLDGEVVVEDRVRGRVVFRNSELDDLIIARADGTPTYNFTVVVDDMDMGITHVVRGDDHLNNTPRQVNLYRALGVEPPVFAHVPMILGEDGKRLSKRHGAVSVLQYRDQGYLPEAVLNYLVRLGWSHGDQEVFTLDEMVSLFDLEDINHSASTFNPQKLLWLNQQHIMRAEPAHVARYLAHHLGERDIDPADGPPLEAVVAAQQERAKTLVEMAENSLFFYRDPADYEPKAARKNLKPETEAALVRVRDLLSELEDWRPEAIHECVLKAAEVLELKLGKVAQPVRVAVSGGPVSPPIDQTLALLGKEATLRRIQAAIDWIDRQAAG.

Residues 10–20 (PSPTGYLHIGG) carry the 'HIGH' region motif. Cys-99, Cys-101, Cys-126, and Asp-128 together coordinate Zn(2+). The 'KMSKS' region signature appears at 238–242 (RLSKR). Residue Lys-241 coordinates ATP.

This sequence belongs to the class-I aminoacyl-tRNA synthetase family. Glutamate--tRNA ligase type 1 subfamily. As to quaternary structure, monomer. Requires Zn(2+) as cofactor.

Its subcellular location is the cytoplasm. It catalyses the reaction tRNA(Glu) + L-glutamate + ATP = L-glutamyl-tRNA(Glu) + AMP + diphosphate. Functionally, catalyzes the attachment of glutamate to tRNA(Glu) in a two-step reaction: glutamate is first activated by ATP to form Glu-AMP and then transferred to the acceptor end of tRNA(Glu). The chain is Glutamate--tRNA ligase 1 from Alkalilimnicola ehrlichii (strain ATCC BAA-1101 / DSM 17681 / MLHE-1).